Reading from the N-terminus, the 93-residue chain is Aspartyl/glutamyl-tRNA(Asn/Gln) amidotransferase subunit C (93 aa).

It belongs to the GatC family. In terms of assembly, heterotrimer of A, B and C subunits.

The catalysed reaction is L-glutamyl-tRNA(Gln) + L-glutamine + ATP + H2O = L-glutaminyl-tRNA(Gln) + L-glutamate + ADP + phosphate + H(+). It carries out the reaction L-aspartyl-tRNA(Asn) + L-glutamine + ATP + H2O = L-asparaginyl-tRNA(Asn) + L-glutamate + ADP + phosphate + 2 H(+). Functionally, allows the formation of correctly charged Asn-tRNA(Asn) or Gln-tRNA(Gln) through the transamidation of misacylated Asp-tRNA(Asn) or Glu-tRNA(Gln) in organisms which lack either or both of asparaginyl-tRNA or glutaminyl-tRNA synthetases. The reaction takes place in the presence of glutamine and ATP through an activated phospho-Asp-tRNA(Asn) or phospho-Glu-tRNA(Gln). This chain is Aspartyl/glutamyl-tRNA(Asn/Gln) amidotransferase subunit C, found in Methanococcoides burtonii (strain DSM 6242 / NBRC 107633 / OCM 468 / ACE-M).